We begin with the raw amino-acid sequence, 191 residues long: MDSNDSEFGIGDWQRLLRSLGEDPSRQGLRETPERVTRAWAHWTRGYKQDPAAILKTFADGGESYDELIVVRQIPVYSHCEHHLAPFFGHATIGYLPTGHIVGLSKLTRLVNCFAARLQVQERLTQQVAQSLLEHLQPKAVGVILRCRHMCMESRGIAVAGEETVTSAMLGDLKTNAAQRAEFLALAESHE.

Zn(2+) contacts are provided by Cys80, His83, and Cys151.

This sequence belongs to the GTP cyclohydrolase I family. Toroid-shaped homodecamer, composed of two pentamers of five dimers.

It catalyses the reaction GTP + H2O = 7,8-dihydroneopterin 3'-triphosphate + formate + H(+). It functions in the pathway cofactor biosynthesis; 7,8-dihydroneopterin triphosphate biosynthesis; 7,8-dihydroneopterin triphosphate from GTP: step 1/1. The chain is GTP cyclohydrolase 1 from Nitrosospira multiformis (strain ATCC 25196 / NCIMB 11849 / C 71).